The primary structure comprises 229 residues: MKIGIVGAMAQEVEILKNLMADRTETRVASAVIFEGKINGKDVALLQSGIGKVAAAIGTTALLQLAKPDCVINTGSAGGVAKGLKVGDIVISDETRYHDADVTAFGYEKGQLPANPAAFLSDKKLADLAQEIAEKQGQSVKRGLICSGDSFINSEDKITQIQADFPNVMGVEMEATAIAQVCYAFNVPFVVVRAISDGGDGKASMSFEEFLPLAAKQSSTLVLGMIDRL.

The active-site Proton acceptor is Glu-12. Residues Gly-78, Ile-152, and 173–174 (ME) each bind substrate. Residue Asp-197 is the Proton donor of the active site.

The protein belongs to the PNP/UDP phosphorylase family. MtnN subfamily.

It catalyses the reaction S-adenosyl-L-homocysteine + H2O = S-(5-deoxy-D-ribos-5-yl)-L-homocysteine + adenine. It carries out the reaction S-methyl-5'-thioadenosine + H2O = 5-(methylsulfanyl)-D-ribose + adenine. The enzyme catalyses 5'-deoxyadenosine + H2O = 5-deoxy-D-ribose + adenine. It participates in amino-acid biosynthesis; L-methionine biosynthesis via salvage pathway; S-methyl-5-thio-alpha-D-ribose 1-phosphate from S-methyl-5'-thioadenosine (hydrolase route): step 1/2. Its function is as follows. Catalyzes the irreversible cleavage of the glycosidic bond in both 5'-methylthioadenosine (MTA) and S-adenosylhomocysteine (SAH/AdoHcy) to adenine and the corresponding thioribose, 5'-methylthioribose and S-ribosylhomocysteine, respectively. Also cleaves 5'-deoxyadenosine, a toxic by-product of radical S-adenosylmethionine (SAM) enzymes, into 5-deoxyribose and adenine. This is 5'-methylthioadenosine/S-adenosylhomocysteine nucleosidase from Haemophilus influenzae (strain PittGG).